A 304-amino-acid chain; its full sequence is Protoheme IX farnesyltransferase (304 aa).

A run of 7 helical transmembrane segments spans residues 24–44 (VMTLVIFTGLCGLLAAPGTIH), 45–65 (PVIAFTAILCIAVGAGGAAAL), 107–127 (VFVMGLGVGWLAAVILAFSIF), 145–165 (IVIGGGAGAFPPMIGWVAVTG), 172–192 (VLLFLIIFMWTPPHFWALALF), 234–254 (WIGGAGAVYGWSALVLGLVFV), and 277–297 (LFGYSVLYLFVLFGMLVGDRL).

Belongs to the UbiA prenyltransferase family. Protoheme IX farnesyltransferase subfamily.

Its subcellular location is the cell inner membrane. It carries out the reaction heme b + (2E,6E)-farnesyl diphosphate + H2O = Fe(II)-heme o + diphosphate. It participates in porphyrin-containing compound metabolism; heme O biosynthesis; heme O from protoheme: step 1/1. In terms of biological role, converts heme B (protoheme IX) to heme O by substitution of the vinyl group on carbon 2 of heme B porphyrin ring with a hydroxyethyl farnesyl side group. The polypeptide is Protoheme IX farnesyltransferase (Novosphingobium aromaticivorans (strain ATCC 700278 / DSM 12444 / CCUG 56034 / CIP 105152 / NBRC 16084 / F199)).